Reading from the N-terminus, the 965-residue chain is FKBP12-associated protein 1 (965 aa).

Residues 68–118 form an RING-type; degenerate zinc finger; sequence CMICTVEMDYTCQMFACKRCYRVFDYGCIREWALKSTEKTVDRIWKCPNCY. NF-X1-type zinc fingers lie at residues 159 to 177, 216 to 235, 362 to 382, 468 to 487, and 586 to 606; these read CMHG…ECTR, CSIH…PCPE, CGKH…PCLQ, CGIH…PCLE, and CYHT…VCKQ. Residues 733–796 enclose the R3H domain; sequence ERWCSQIEAI…MRSVFIKKED (64 aa). Phosphothreonine is present on Thr-951. Ser-958 carries the phosphoserine modification.

This sequence belongs to the NFX1 family. Interacts with FPR1.

It is found in the cytoplasm. The protein resides in the nucleus. Functionally, may play a role in transcription regulation. The protein is FKBP12-associated protein 1 (FAP1) of Saccharomyces cerevisiae (strain ATCC 204508 / S288c) (Baker's yeast).